Here is a 167-residue protein sequence, read N- to C-terminus: Probable membrane-bound hydrogenase subunit mbhJ (167 aa).

Positions 35, 38, 102, and 132 each coordinate [4Fe-4S] cluster.

It belongs to the complex I 20 kDa subunit family. The membrane-bound hydrogenase complex is composed of MbhK and MbhL, but may also contain MbhJ. [4Fe-4S] cluster is required as a cofactor.

It localises to the cell membrane. It carries out the reaction H2 + 2 oxidized [2Fe-2S]-[ferredoxin] = 2 reduced [2Fe-2S]-[ferredoxin] + 2 H(+). Its activity is regulated as follows. Inhibited by 0.1 mM Cu(2+). Its function is as follows. Probable subunit of a hydrogen-evolving hydrogenase that utilizes protons both as a substrate for hydrogen production and proton translocation. Acts by coupling the redox reaction via ferredoxin and iron-sulfur (Fe-S) clusters to proton translocation across the membrane, thereby conserving the redox energy in a proton gradient. The sequence is that of Probable membrane-bound hydrogenase subunit mbhJ from Pyrococcus furiosus (strain ATCC 43587 / DSM 3638 / JCM 8422 / Vc1).